The chain runs to 71 residues: MRKAFYTWLMAQRHSTSNKPAALLADLVFEDTTFPKHTDDFETISRYLEEEASFAFNLGQFDQIWEDYLSH.

The protein belongs to the UPF0346 family.

The sequence is that of UPF0346 protein Sez_1447 from Streptococcus equi subsp. zooepidemicus (strain MGCS10565).